The chain runs to 462 residues: tRNA modification GTPase MnmE (462 aa).

(6S)-5-formyl-5,6,7,8-tetrahydrofolate is bound by residues Arg27, Glu89, and Arg128. Positions 223–383 constitute a TrmE-type G domain; it reads GLKIAIVGRP…LEAAILAAVG (161 aa). GTP is bound by residues 233–238, 252–258, and 277–280; these read NVGKSS, TDLPGRT, and DTAG. Positions 237 and 258 each coordinate Mg(2+). Lys462 provides a ligand contact to (6S)-5-formyl-5,6,7,8-tetrahydrofolate.

This sequence belongs to the TRAFAC class TrmE-Era-EngA-EngB-Septin-like GTPase superfamily. TrmE GTPase family. Homodimer. Heterotetramer of two MnmE and two MnmG subunits. K(+) serves as cofactor.

It is found in the cytoplasm. Exhibits a very high intrinsic GTPase hydrolysis rate. Involved in the addition of a carboxymethylaminomethyl (cmnm) group at the wobble position (U34) of certain tRNAs, forming tRNA-cmnm(5)s(2)U34. This is tRNA modification GTPase MnmE from Synechococcus sp. (strain ATCC 27144 / PCC 6301 / SAUG 1402/1) (Anacystis nidulans).